We begin with the raw amino-acid sequence, 161 residues long: GTP-dependent dephospho-CoA kinase (161 aa).

GTP-binding residues include Asp40, Val41, Val42, Asp59, and Glu112.

It belongs to the GTP-dependent DPCK family.

It carries out the reaction 3'-dephospho-CoA + GTP = GDP + CoA + H(+). It participates in cofactor biosynthesis; coenzyme A biosynthesis. Functionally, catalyzes the GTP-dependent phosphorylation of the 3'-hydroxyl group of dephosphocoenzyme A to form coenzyme A (CoA). This chain is GTP-dependent dephospho-CoA kinase, found in Methanoculleus marisnigri (strain ATCC 35101 / DSM 1498 / JR1).